A 147-amino-acid chain; its full sequence is Putative protein adenylyltransferase MJ1305 (147 aa).

The GSX(10)DXD motif signature appears at 32-46 (GSYARGTAVEYSDVD). Residues D44 and D46 each coordinate Mg(2+).

Belongs to the MntA antitoxin family. It depends on Mg(2+) as a cofactor.

It catalyses the reaction L-tyrosyl-[protein] + ATP = O-(5'-adenylyl)-L-tyrosyl-[protein] + diphosphate. The enzyme catalyses O-(5'-adenylyl)-L-tyrosyl-[protein] + ATP = O-[5'-(adenylyl-(5'-&gt;3')-adenylyl)]-L-tyrosyl-[protein] + diphosphate. Functionally, putative antitoxin component of a putative type VII toxin-antitoxin (TA) system. Its cognate toxin might be MJ1304, which it might AMPylate. The chain is Putative protein adenylyltransferase MJ1305 from Methanocaldococcus jannaschii (strain ATCC 43067 / DSM 2661 / JAL-1 / JCM 10045 / NBRC 100440) (Methanococcus jannaschii).